We begin with the raw amino-acid sequence, 806 residues long: Leucine--tRNA ligase (806 aa).

Residues S54 to H64 carry the 'HIGH' region motif. The 'KMSKS' region motif lies at K571–S575. K574 lines the ATP pocket.

It belongs to the class-I aminoacyl-tRNA synthetase family.

The protein resides in the cytoplasm. It catalyses the reaction tRNA(Leu) + L-leucine + ATP = L-leucyl-tRNA(Leu) + AMP + diphosphate. This is Leucine--tRNA ligase from Tropheryma whipplei (strain TW08/27) (Whipple's bacillus).